A 259-amino-acid polypeptide reads, in one-letter code: UPF0246 protein RD1_0358 (259 aa).

Belongs to the UPF0246 family.

The protein is UPF0246 protein RD1_0358 of Roseobacter denitrificans (strain ATCC 33942 / OCh 114) (Erythrobacter sp. (strain OCh 114)).